Here is a 199-residue protein sequence, read N- to C-terminus: Imidazole glycerol phosphate synthase subunit HisH (199 aa).

Residues 2–199 enclose the Glutamine amidotransferase type-1 domain; the sequence is RAVIIDYGVG…LTNVYRWLRK (198 aa). Cysteine 76 functions as the Nucleophile in the catalytic mechanism. Catalysis depends on residues histidine 178 and glutamate 180.

In terms of assembly, heterodimer of HisH and HisF.

The protein resides in the cytoplasm. It carries out the reaction 5-[(5-phospho-1-deoxy-D-ribulos-1-ylimino)methylamino]-1-(5-phospho-beta-D-ribosyl)imidazole-4-carboxamide + L-glutamine = D-erythro-1-(imidazol-4-yl)glycerol 3-phosphate + 5-amino-1-(5-phospho-beta-D-ribosyl)imidazole-4-carboxamide + L-glutamate + H(+). The enzyme catalyses L-glutamine + H2O = L-glutamate + NH4(+). It functions in the pathway amino-acid biosynthesis; L-histidine biosynthesis; L-histidine from 5-phospho-alpha-D-ribose 1-diphosphate: step 5/9. In terms of biological role, IGPS catalyzes the conversion of PRFAR and glutamine to IGP, AICAR and glutamate. The HisH subunit catalyzes the hydrolysis of glutamine to glutamate and ammonia as part of the synthesis of IGP and AICAR. The resulting ammonia molecule is channeled to the active site of HisF. The chain is Imidazole glycerol phosphate synthase subunit HisH from Sulfolobus acidocaldarius (strain ATCC 33909 / DSM 639 / JCM 8929 / NBRC 15157 / NCIMB 11770).